Reading from the N-terminus, the 333-residue chain is Trans-enoyl reductase apdC (333 aa).

45 to 48 is a binding site for NADP(+); that stretch reads FDAK. 131-138 provides a ligand contact to substrate; sequence VGLATVGM. NADP(+)-binding positions include 167-170, tyrosine 185, and 232-233; these read SPHN and LD. A substrate-binding site is contributed by 252 to 256; it reads SVTMY. An NADP(+)-binding site is contributed by 321 to 322; that stretch reads VS.

This sequence belongs to the zinc-containing alcohol dehydrogenase family. Monomer.

Its pathway is secondary metabolite biosynthesis. Trans-enoyl reductase; part of the gene cluster that mediates the biosynthesis of aspyridones. The polyketide-amino acid backbone preaspyridone A is first assembled by the PKS-NRPS hybrid apdA. The assembly of preaspyridone A is initiated by loading of malonyl-CoA onto apdA, followed by decarboxylation to yield the acetyl starter unit. The growing polyketide chain then elongates into a tetraketide. The adpA PKS module catalyzes three Claisen condensations, as well as beta-keto processing and methylation. Alpha-methylation step during polyketide synthesis is a prerequisite and a key checkpoint for chain transfer between PKS and NRPS modules. The downstream NRPS module contains the condensation (C), adenylation (A), and thiolation (T) domains and catalyzes the incorporation of tyrosine via the formation of the L-tyrosinyl-thioester and the amide linkage between L-tyrosinyl-thioester and the tetraketide. The bimodular assembly line is terminated with a reductase (R) domain that facilitates formation and release of the tetramic acid product. Because apdA lacks a designated enoylreductase (ER) domain, the required activity is provided the enoyl reductase apdC. ApdC appears to operate with different stereoselectivity in different PKS cycle. Combined with apdC, apdA is proposed to synthesize preaspyridone A via about 20 enzymatic steps. A number of oxidative steps performed successively by the cytochrome P450 monooxygenases apdE and apdB are required for the conversion of preaspyridone A to aspyridone A. The cytochrome P450 monooxygenase apdE is responsible for the oxidative dephenylation of preaspyridone A. Finally, the predicted FAD-dependent monooxygenase apdD and the acyl-CoA dehydrogenase apdG may be involved in the transformation of aspyridone A into aspyridone B. This chain is Trans-enoyl reductase apdC, found in Emericella nidulans (strain FGSC A4 / ATCC 38163 / CBS 112.46 / NRRL 194 / M139) (Aspergillus nidulans).